We begin with the raw amino-acid sequence, 56 residues long: MAKKGSTLLVKLASSAKTGFFYVKKRNPKKLINKLSFRKYDPVVRKHVLFSEEKLK.

Belongs to the bacterial ribosomal protein bL33 family.

The chain is Large ribosomal subunit protein bL33 from Ehrlichia canis (strain Jake).